Here is a 279-residue protein sequence, read N- to C-terminus: Diaminopimelate epimerase (279 aa).

Substrate contacts are provided by asparagine 12, glutamine 45, and asparagine 65. Catalysis depends on cysteine 74, which acts as the Proton donor. Substrate is bound by residues 75-76 (GN), asparagine 162, asparagine 195, and 213-214 (ER). Cysteine 222 (proton acceptor) is an active-site residue. 223–224 (GT) provides a ligand contact to substrate.

The protein belongs to the diaminopimelate epimerase family. Homodimer.

It is found in the cytoplasm. The enzyme catalyses (2S,6S)-2,6-diaminopimelate = meso-2,6-diaminopimelate. It functions in the pathway amino-acid biosynthesis; L-lysine biosynthesis via DAP pathway; DL-2,6-diaminopimelate from LL-2,6-diaminopimelate: step 1/1. Functionally, catalyzes the stereoinversion of LL-2,6-diaminopimelate (L,L-DAP) to meso-diaminopimelate (meso-DAP), a precursor of L-lysine and an essential component of the bacterial peptidoglycan. The protein is Diaminopimelate epimerase of Shewanella woodyi (strain ATCC 51908 / MS32).